We begin with the raw amino-acid sequence, 185 residues long: HTH-type transcriptional repressor OpcR (185 aa).

The H-T-H motif DNA-binding region spans 49–73 (LSELSEATGMSKTRMSQVVREMIDA).

The protein belongs to the GbsR family.

With respect to regulation, is not choline-responsive. Negatively regulates the transcription of the opuC operon. In the absence of GbsR, is also a negative regulator of the opuB operon. Binds to an inverted repeat in the promoter region of the operons. The sequence is that of HTH-type transcriptional repressor OpcR (opcR) from Bacillus subtilis (strain 168).